A 492-amino-acid chain; its full sequence is 2,3-bisphosphoglycerate-independent phosphoglycerate mutase (492 aa).

Mn(2+) contacts are provided by Asp-11 and Ser-61. Ser-61 serves as the catalytic Phosphoserine intermediate. Residues His-118, 147–148 (RD), Arg-178, Arg-184, 248–251 (RNDR), and Lys-320 contribute to the substrate site. Mn(2+) contacts are provided by Asp-386, His-390, Asp-427, His-428, and His-445.

Belongs to the BPG-independent phosphoglycerate mutase family. In terms of assembly, monomer. Requires Mn(2+) as cofactor.

The catalysed reaction is (2R)-2-phosphoglycerate = (2R)-3-phosphoglycerate. It functions in the pathway carbohydrate degradation; glycolysis; pyruvate from D-glyceraldehyde 3-phosphate: step 3/5. Its function is as follows. Catalyzes the interconversion of 2-phosphoglycerate and 3-phosphoglycerate. The polypeptide is 2,3-bisphosphoglycerate-independent phosphoglycerate mutase (Campylobacter jejuni subsp. jejuni serotype O:6 (strain 81116 / NCTC 11828)).